Reading from the N-terminus, the 704-residue chain is DNA-binding protein RFX2 (704 aa).

The disordered stretch occupies residues 1 to 39 (MQNSEGGADSPASVALRPSAAAPPVPASPQRVLVQAASS). Low complexity predominate over residues 10 to 20 (SPASVALRPSA). Ser28 is modified (phosphoserine). A DNA-binding region (RFX-type winged-helix) is located at residues 199–274 (HLQWLLDNYE…YHYYGIRLKP (76 aa)). Residues 292–334 (QQPMHQKPRYRPAQKTDSLGDSSSHSGLHSTPEQTTAAQNQHH) form a disordered region. A compositionally biased stretch (low complexity) spans 307 to 334 (TDSLGDSSSHSGLHSTPEQTTAAQNQHH). Ser416 is subject to Phosphoserine.

The protein belongs to the RFX family. Homodimer; probably only forms homodimers in testis. Heterodimer; heterodimerizes with RFX1 and RFX3.

It localises to the nucleus. Its subcellular location is the cytoplasm. Functionally, transcription factor that acts as a key regulator of spermatogenesis. Acts by regulating expression of genes required for the haploid phase during spermiogenesis, such as genes required for cilium assembly and function. Recognizes and binds the X-box, a regulatory motif with DNA sequence 5'-GTNRCC(0-3N)RGYAAC-3' present on promoters. Probably activates transcription of the testis-specific histone gene H1-6. The sequence is that of DNA-binding protein RFX2 (RFX2) from Pongo abelii (Sumatran orangutan).